The following is a 210-amino-acid chain: Chaperone protein TorD (210 aa).

The protein belongs to the TorD/DmsD family. TorD subfamily.

It is found in the cytoplasm. Functionally, involved in the biogenesis of TorA. Acts on TorA before the insertion of the molybdenum cofactor and, as a result, probably favors a conformation of the apoenzyme that is competent for acquiring the cofactor. This is Chaperone protein TorD from Salmonella schwarzengrund (strain CVM19633).